A 521-amino-acid chain; its full sequence is Bifunctional purine biosynthesis protein PurH (521 aa).

The MGS-like domain maps to 1–145; the sequence is MIKQALISVS…KNHRDVTVVV (145 aa).

Belongs to the PurH family.

The enzyme catalyses (6R)-10-formyltetrahydrofolate + 5-amino-1-(5-phospho-beta-D-ribosyl)imidazole-4-carboxamide = 5-formamido-1-(5-phospho-D-ribosyl)imidazole-4-carboxamide + (6S)-5,6,7,8-tetrahydrofolate. The catalysed reaction is IMP + H2O = 5-formamido-1-(5-phospho-D-ribosyl)imidazole-4-carboxamide. It participates in purine metabolism; IMP biosynthesis via de novo pathway; 5-formamido-1-(5-phospho-D-ribosyl)imidazole-4-carboxamide from 5-amino-1-(5-phospho-D-ribosyl)imidazole-4-carboxamide (10-formyl THF route): step 1/1. Its pathway is purine metabolism; IMP biosynthesis via de novo pathway; IMP from 5-formamido-1-(5-phospho-D-ribosyl)imidazole-4-carboxamide: step 1/1. This is Bifunctional purine biosynthesis protein PurH from Paraburkholderia phymatum (strain DSM 17167 / CIP 108236 / LMG 21445 / STM815) (Burkholderia phymatum).